Here is a 210-residue protein sequence, read N- to C-terminus: Glutathione S-transferase P (210 aa).

The GST N-terminal domain maps to 2-81; it reads ASYTIVYFPV…HLGRTLGLYG (80 aa). At Tyr-4 the chain carries Phosphotyrosine; by EGFR. Residues Tyr-8, Arg-14, Trp-39, Lys-45, and 52 to 53 contribute to the glutathione site; that span reads QL. Residue Thr-62 is modified to Phosphothreonine. 65 to 66 is a glutathione binding site; the sequence is QS. The GST C-terminal domain maps to 83-204; sequence DQREAALVDM…ASPEHVNRPI (122 aa). N6-succinyllysine occurs at positions 103 and 116. Position 128 is an N6-acetyllysine (Lys-128).

This sequence belongs to the GST superfamily. Pi family. In terms of assembly, homodimer. Interacts with CDK5.

The protein resides in the cytoplasm. It is found in the mitochondrion. It localises to the nucleus. It carries out the reaction RX + glutathione = an S-substituted glutathione + a halide anion + H(+). The catalysed reaction is prostaglandin J2 + glutathione = prostaglandin J2-S-(R)-glutathione. The enzyme catalyses prostaglandin J2 + glutathione = prostaglandin J2-S-(S)-glutathione. It catalyses the reaction prostaglandin A2 + glutathione = prostaglandin A2-S-(S)-glutathione. It carries out the reaction 11(S)-hydroxy-14(S),15(S)-epoxy-(5Z,8Z,12E)-eicosatrienoate + glutathione = (11S,15S)-dihydroxy-14(R)-S-glutathionyl-(5Z,8Z,12E)-eicosatrienoate. Its function is as follows. Conjugation of reduced glutathione to a wide number of exogenous and endogenous hydrophobic electrophiles. Involved in the formation of glutathione conjugates of both prostaglandin A2 (PGA2) and prostaglandin J2 (PGJ2). Participates in the formation of novel hepoxilin regioisomers. Negatively regulates CDK5 activity via p25/p35 translocation to prevent neurodegeneration. The sequence is that of Glutathione S-transferase P (GSTP1) from Capra hircus (Goat).